Here is a 264-residue protein sequence, read N- to C-terminus: Teichoic acids export ATP-binding protein TagH (264 aa).

The 222-residue stretch at 22–243 (ERLKDVIVPF…YEKFLNDFKK (222 aa)) folds into the ABC transporter domain. 57–64 (GINGSGKS) contributes to the ATP binding site.

It belongs to the ABC transporter superfamily. Teichoic acids exporter (TC 3.A.1.104.1) family. As to quaternary structure, the complex is composed of two ATP-binding proteins (TagH) and two transmembrane proteins (TagG).

It localises to the cell membrane. The catalysed reaction is ATP + H2O + teichoic acidSide 1 = ADP + phosphate + teichoic acidSide 2.. Functionally, part of the ABC transporter complex TagGH involved in teichoic acids export. Responsible for energy coupling to the transport system. The protein is Teichoic acids export ATP-binding protein TagH of Staphylococcus saprophyticus subsp. saprophyticus (strain ATCC 15305 / DSM 20229 / NCIMB 8711 / NCTC 7292 / S-41).